Consider the following 633-residue polypeptide: ATP-dependent RNA helicase mrh4, mitochondrial (633 aa).

The transit peptide at 1 to 38 (MNRLGRLSLPLRPQVCLLCQTQATMSSPLAGWQAVRSM) directs the protein to the mitochondrion. The tract at residues 50 to 115 (MVLSSNVDKS…KQKPDSPLYK (66 aa)) is disordered. A compositionally biased stretch (polar residues) spans 52–63 (LSSNVDKSSLKQ). A compositionally biased stretch (basic and acidic residues) spans 98–109 (RSGDSEDDKQKP). The short motif at 142–175 (SSFDQFPLLPVVRHSISSQALSRTGDIVPTPIQR) is the Q motif element. Residues 195-407 (SDHEPNFEQY…RKRYPDIRRL (213 aa)) enclose the Helicase ATP-binding domain. 208–215 (AETGSGKT) contributes to the ATP binding site. The DEAD box motif lies at 354 to 357 (DEAD). The Helicase C-terminal domain occupies 458–633 (FLAQAGPKVK…EGMFRGQALI (176 aa)).

It belongs to the DEAD box helicase family. MRH4 subfamily.

Its subcellular location is the mitochondrion. It carries out the reaction ATP + H2O = ADP + phosphate + H(+). Its function is as follows. ATP-binding RNA helicase involved in mitochondrial RNA metabolism. Required for maintenance of mitochondrial DNA. This chain is ATP-dependent RNA helicase mrh4, mitochondrial (mrh4), found in Aspergillus niger (strain ATCC MYA-4892 / CBS 513.88 / FGSC A1513).